Reading from the N-terminus, the 293-residue chain is Energy-coupling factor transporter ATP-binding protein EcfA2 (293 aa).

The 244-residue stretch at 3-246 (ITFQKVEHRY…ADELEKIGVD (244 aa)) folds into the ABC transporter domain. Residue 40–47 (GHTGSGKS) coordinates ATP.

Belongs to the ABC transporter superfamily. Energy-coupling factor EcfA family. In terms of assembly, forms a stable energy-coupling factor (ECF) transporter complex composed of 2 membrane-embedded substrate-binding proteins (S component), 2 ATP-binding proteins (A component) and 2 transmembrane proteins (T component).

Its subcellular location is the cell membrane. Functionally, ATP-binding (A) component of a common energy-coupling factor (ECF) ABC-transporter complex. Unlike classic ABC transporters this ECF transporter provides the energy necessary to transport a number of different substrates. The protein is Energy-coupling factor transporter ATP-binding protein EcfA2 of Bacillus cereus (strain ATCC 14579 / DSM 31 / CCUG 7414 / JCM 2152 / NBRC 15305 / NCIMB 9373 / NCTC 2599 / NRRL B-3711).